Reading from the N-terminus, the 211-residue chain is Protein-L-isoaspartate O-methyltransferase (211 aa).

Ser-62 is a catalytic residue.

The protein belongs to the methyltransferase superfamily. L-isoaspartyl/D-aspartyl protein methyltransferase family.

It localises to the cytoplasm. It catalyses the reaction [protein]-L-isoaspartate + S-adenosyl-L-methionine = [protein]-L-isoaspartate alpha-methyl ester + S-adenosyl-L-homocysteine. Its function is as follows. Catalyzes the methyl esterification of L-isoaspartyl residues in peptides and proteins that result from spontaneous decomposition of normal L-aspartyl and L-asparaginyl residues. It plays a role in the repair and/or degradation of damaged proteins. This Shewanella loihica (strain ATCC BAA-1088 / PV-4) protein is Protein-L-isoaspartate O-methyltransferase.